The following is a 188-amino-acid chain: uncharacterized protein (188 aa).

At S14 the chain carries Phosphoserine. The disordered stretch occupies residues R165–H188. Basic residues predominate over residues K171–H188.

The protein localises to the nucleus. It is found in the nucleolus. This is an uncharacterized protein from Schizosaccharomyces pombe (strain 972 / ATCC 24843) (Fission yeast).